The primary structure comprises 309 residues: Ornithine carbamoyltransferase (309 aa).

Residues 51–54, Gln-78, Arg-102, and 129–132 each bind carbamoyl phosphate; these read STRT and HPVQ. L-ornithine contacts are provided by residues Asn-160, Asp-224, and 228–229; that span reads SM. Carbamoyl phosphate-binding positions include 264-265 and Arg-292; that span reads CL.

The protein belongs to the aspartate/ornithine carbamoyltransferase superfamily. OTCase family.

Its subcellular location is the cytoplasm. It carries out the reaction carbamoyl phosphate + L-ornithine = L-citrulline + phosphate + H(+). It participates in amino-acid biosynthesis; L-arginine biosynthesis; L-arginine from L-ornithine and carbamoyl phosphate: step 1/3. Its function is as follows. Reversibly catalyzes the transfer of the carbamoyl group from carbamoyl phosphate (CP) to the N(epsilon) atom of ornithine (ORN) to produce L-citrulline. The sequence is that of Ornithine carbamoyltransferase from Campylobacter fetus subsp. fetus (strain 82-40).